The following is a 475-amino-acid chain: Crocetin glucosyltransferase 3 (475 aa).

Catalysis depends on histidine 16, which acts as the Proton acceptor. Residue histidine 16 participates in an anthocyanidin binding. Aspartate 123 acts as the Charge relay in catalysis. Positions 144, 354, 356, 371, 374, 375, 376, and 379 each coordinate UDP-alpha-D-glucose. Alanine 394 is a binding site for an anthocyanidin. Residues glutamate 395 and glutamine 396 each coordinate UDP-alpha-D-glucose.

This sequence belongs to the UDP-glycosyltransferase family. As to expression, mainly expressed in stamens.

The catalysed reaction is crocetin + UDP-alpha-D-glucose = beta-D-glucosyl crocetin + UDP. The enzyme catalyses beta-D-glucosyl crocetin + UDP-alpha-D-glucose = bis(beta-D-glucosyl) crocetin + UDP. It catalyses the reaction beta-D-gentiobiosyl crocetin + UDP-alpha-D-glucose = beta-D-gentiobiosyl beta-D-glucosyl crocetin + UDP. Functionally, crocetin glucosyltransferase involved in the synthesis of crocin, one of the apocarotenoids responsible for the color and bitter taste of saffron. The sequence is that of Crocetin glucosyltransferase 3 (GLT3) from Crocus sativus (Saffron).